Here is a 624-residue protein sequence, read N- to C-terminus: Exocyst complex component EXO70B1 (624 aa).

The tract at residues 148-176 is disordered; sequence FGLNPQGDAGAMNHRFDSEEEEDDDRDFN.

The protein belongs to the EXO70 family. Interacts with EXO70B2, SEC5A and EXO84B. Binds to PUB18. Binds directly to B1L at the plasma membrane and in small vesicles. In terms of processing, target of the E3 ubiquitin-protein ligase PUB18 that mediates its ubiquitination and degradation via the 26S proteasome.

The protein localises to the cytoplasmic vesicle. It is found in the phagosome. Its subcellular location is the endomembrane system. It localises to the cell membrane. The protein resides in the vesicle. Functionally, component of an exocyst subcomplex specifically involved in autophagy-related, Golgi-independent membrane traffic to the vacuole. Regulates autophagosome formation and autophagy-related Golgi-independent import into the vacuole. Positive regulator of both abscisic acid (ABA)-promoted and mannitol (drought)-promoted stomatal closure. Involved in the regulation of lateral root formation. This Arabidopsis thaliana (Mouse-ear cress) protein is Exocyst complex component EXO70B1.